A 289-amino-acid polypeptide reads, in one-letter code: Protease HtpX homolog (289 aa).

2 helical membrane passes run 11–31 (AALF…IAAG) and 34–54 (STTP…YGYW). His-138 provides a ligand contact to Zn(2+). Glu-139 is a catalytic residue. His-142 lines the Zn(2+) pocket. The next 2 helical transmembrane spans lie at 152 to 172 (SVVA…LIFG) and 182 to 202 (LATI…QMAI). Zn(2+) is bound at residue Glu-207.

The protein belongs to the peptidase M48B family. Zn(2+) serves as cofactor.

It is found in the cell membrane. In Paenarthrobacter aurescens (strain TC1), this protein is Protease HtpX homolog.